The sequence spans 381 residues: CD209 antigen (381 aa).

Over 1 to 37 (MSDSKEPRLQQLGLLEEEQLGGVGFRQTRGYKSLAGC) the chain is Cytoplasmic. 3 short sequence motifs (endocytosis signal) span residues 14 to 15 (LL), 16 to 18 (EEE), and 31 to 34 (YKSL). A helical; Signal-anchor for type II membrane protein transmembrane segment spans residues 38-58 (LGHGPLVLQLLSFTLLAGLLV). Over 59–381 (QVSKVPSSLS…TPTTPNPPPE (323 aa)) the chain is Extracellular. N-linked (GlcNAc...) asparagine glycosylation is present at Asn-80. 6 consecutive repeat copies span residues 96 to 118 (KQQE…PEKS), 119 to 141 (KQQE…PEKS), 142 to 164 (KLQE…PEKS), 165 to 187 (KQQE…PEKS), 188 to 210 (KQQE…PDRS), and 211 to 234 (KQQE…RPCP). Residues 96–303 (KQQEIYQELT…GLSDLNHEGT (208 aa)) form a 6 X approximate tandem repeats region. 3 disulfides stabilise this stretch: Cys-233–Cys-244, Cys-261–Cys-354, and Cys-333–Cys-346. A C-type lectin domain is found at 240 to 355 (FQGNCYFMSN…CNLAKFWICK (116 aa)). The Ca(2+) site is built by Glu-324, Asn-326, Ile-328, Glu-331, Asn-342, and Asp-343. Positions 359-381 (ASCSGDEERLLSPTPTTPNPPPE) are disordered.

As to quaternary structure, homotetramer. Interacts with C1QBP; the interaction is indicative for a C1q:C1QBP:CD209 signaling complex. Interacts with ICAM2 and ICAM3 by binding to mannose-like carbohydrates. Interacts (via C-type lectin domain) with CEACAM1 (via Lewis X moieties); this interaction is regulated by the glycosylation pattern of CEACAM1 on cell types and regulates contact between dendritic cells and neutrophils. As to expression, expressed in lymph nodes.

It is found in the membrane. In terms of biological role, pathogen-recognition receptor expressed on the surface of immature dendritic cells (DCs) and involved in initiation of primary immune response. Thought to mediate the endocytosis of pathogens which are subsequently degraded in lysosomal compartments. The receptor returns to the cell membrane surface and the pathogen-derived antigens are presented to resting T-cells via MHC class II proteins to initiate the adaptive immune response. Probably recognizes in a calcium-dependent manner high mannose N-linked oligosaccharides in a variety of pathogen antigens. On DCs it is a high affinity receptor for ICAM2 and ICAM3 by binding to mannose-like carbohydrates. May act as a DC rolling receptor that mediates transendothelial migration of DC presursors from blood to tissues by binding endothelial ICAM2. Seems to regulate DC-induced T-cell proliferation by binding to ICAM3 on T-cells in the immunological synapse formed between DC and T-cells. This is CD209 antigen (CD209) from Chlorocebus aethiops (Green monkey).